We begin with the raw amino-acid sequence, 565 residues long: FACT complex subunit ctc-1 (565 aa).

Disordered stretches follow at residues 151–173 and 477–565; these read GNDG…ASAG and LGDD…KKTA. Gly residues predominate over residues 152 to 165; sequence NDGGKSNGHSGTGG. 3 stretches are compositionally biased toward acidic residues: residues 478–489, 500–522, and 532–553; these read GDDDMASSDEEA, DEDE…AEEY, and GSEE…DDDE.

This sequence belongs to the SSRP1 family. As to quaternary structure, forms a stable heterodimer with ctc-2/spt16. The dimer of ctc-1 and ctc-2 weakly associates with multiple molecules of nhp-1/nhp6 to form the FACT complex.

It localises to the nucleus. The protein localises to the chromosome. Component of the FACT complex, a general chromatin factor that acts to reorganize nucleosomes. The FACT complex is involved in multiple processes that require DNA as a template such as mRNA elongation, DNA replication and DNA repair. During transcription elongation the FACT complex acts as a histone chaperone that both destabilizes and restores nucleosomal structure. It facilitates the passage of RNA polymerase II and transcription by promoting the dissociation of one histone H2A-H2B dimer from the nucleosome, then subsequently promotes the reestablishment of the nucleosome following the passage of RNA polymerase II. This chain is FACT complex subunit ctc-1 (ctc-1), found in Neurospora crassa (strain ATCC 24698 / 74-OR23-1A / CBS 708.71 / DSM 1257 / FGSC 987).